Reading from the N-terminus, the 316-residue chain is L-lactate dehydrogenase 1 (316 aa).

4 residues coordinate NAD(+): Val-17, Asp-38, Lys-43, and Tyr-69. Substrate-binding positions include Arg-92 and 124–127 (NPVD). Residues 122–124 (VSN) and Thr-147 each bind NAD(+). Position 152–155 (152–155 (DTSR)) interacts with substrate. Catalysis depends on His-179, which acts as the Proton acceptor. Thr-234 serves as a coordination point for substrate.

Belongs to the LDH/MDH superfamily. LDH family. Homotetramer.

Its subcellular location is the cytoplasm. The enzyme catalyses (S)-lactate + NAD(+) = pyruvate + NADH + H(+). The protein operates within fermentation; pyruvate fermentation to lactate; (S)-lactate from pyruvate: step 1/1. Functionally, catalyzes the conversion of lactate to pyruvate. The polypeptide is L-lactate dehydrogenase 1 (Bifidobacterium longum subsp. longum (strain ATCC 15707 / DSM 20219 / JCM 1217 / NCTC 11818 / E194b)).